The chain runs to 246 residues: Probable transcriptional regulatory protein ACP_0521 (246 aa).

The protein belongs to the TACO1 family.

The protein resides in the cytoplasm. The chain is Probable transcriptional regulatory protein ACP_0521 from Acidobacterium capsulatum (strain ATCC 51196 / DSM 11244 / BCRC 80197 / JCM 7670 / NBRC 15755 / NCIMB 13165 / 161).